Consider the following 243-residue polypeptide: Venom nerve growth factor 1 (243 aa).

The N-terminal stretch at 1-18 (MSMLCYTLIIAFLIGIWA) is a signal peptide. Residues 19–125 (VPKSEDNAPL…ALNRNIRAKR (107 aa)) constitute a propeptide that is removed on maturation. Cystine bridges form between Cys-139-Cys-204, Cys-182-Cys-232, and Cys-192-Cys-234. Residue Asn-148 is glycosylated (N-linked (GlcNAc...) asparagine).

The protein belongs to the NGF-beta family. In terms of assembly, homodimer; non-covalently linked. As to expression, expressed by the venom gland.

The protein resides in the secreted. In terms of biological role, nerve growth factor is important for the development and maintenance of the sympathetic and sensory nervous systems. It stimulates division and differentiation of sympathetic and embryonic sensory neurons as well as basal forebrain cholinergic neurons in the brain. Its relevance in the snake venom is not clear. However, it has been shown to inhibit metalloproteinase-dependent proteolysis of platelet glycoprotein Ib alpha, suggesting a metalloproteinase inhibition to prevent metalloprotease autodigestion and/or protection against prey proteases. Binds a lipid between the two protein chains in the homodimer. The lipid-bound form promotes histamine relase from mouse mast cells, contrary to the lipid-free form. The polypeptide is Venom nerve growth factor 1 (Naja sputatrix (Malayan spitting cobra)).